The primary structure comprises 171 residues: LIM domain transcription factor LMO4-B (171 aa).

Positions 1-19 (MVNNRISESTTTAVSNNGS) are enriched in polar residues. Positions 1–20 (MVNNRISESTTTAVSNNGSP) are disordered. LIM zinc-binding domains lie at 22–84 (KACA…LFGN) and 86–148 (GACN…GLLN).

Acts as a positive cofactor of GATA transcription factors to establish the identity of the ventral mesoderm during gastrulation. Down-regulation in the dorsal mesoderm is necessary for the proper formation of this territory since, when present, lmo4 may bind ldb1 and restrict the availability of this cofactor for Spemman organizer transcription factors. At neurula stages, suppresses primary neuron differentiation and modulates gene expression at the Isthmic Organizer of the midbrain-hindbrain boundary. This is LIM domain transcription factor LMO4-B (lmo4-b) from Xenopus laevis (African clawed frog).